A 218-amino-acid chain; its full sequence is Akirin (218 aa).

A disordered region spans residues 96 to 150; that stretch reads KAIPRSNDFDDDGDQRGDGCSSNYSKAYRAPSSPKSGSDSEGEAPSTSVTDRSSA. A compositionally biased stretch (polar residues) spans 128–147; sequence SPKSGSDSEGEAPSTSVTDR.

It belongs to the akirin family. In terms of assembly, interacts with hda-1, a component of the NuRD complex. Interacts with let-418, a component of the NuRD and MEC complexes. Interacts with the transcription factor ceh-18. Interacts with ima-2. Localizes to somatic tissues throughout the body, including muscle cells. Expressed in lateral epithelial seam cells, the hyp7 epidermal syncytium, and multiple head and tail neurons.

It localises to the nucleus. Its function is as follows. Molecular adapter that acts as a bridge between a variety of multiprotein complexes, and which is involved in antifungal innate immunity, development of the muscle and sister chromatid cohesion. Plays a role in antifungal innate immunity by acting as a bridge between components of the NuRD (Nucleosome Remodeling and Deacetylase) and MEC chromatin remodeling complexes. NuRD and MEC complexes bind to the promoters of antimicrobial peptide genes and may recruit other proteins such as ceh-18 to control gene expression in response to fungal infection. During meiotic prophase I, plays a role in the disassembly of synaptonemal complex proteins and in the regulation of chromosome condensation and segregation. Together with nuclear import receptor ima-2, required for the import and load of cohesin complex proteins in meiotic nuclei, possibly by acting as a bridge between ima-2 and cohesins. Required for embryonic development of muscle tissue. In Caenorhabditis elegans, this protein is Akirin.